The chain runs to 284 residues: Distal membrane arm assembly component 2 (284 aa).

This sequence belongs to the ATP synthase subunit s family. In terms of assembly, associates with mitochondrial complex I assembly intermediates during its biogenesis.

Involved in the assembly of the mitochondrial membrane respiratory chain NADH dehydrogenase (Complex I). The sequence is that of Distal membrane arm assembly component 2 from Drosophila melanogaster (Fruit fly).